Here is a 1293-residue protein sequence, read N- to C-terminus: Galactose/N-acetyl-D-galactosamine lectin heavy subunit 1 (1293 aa).

A signal peptide spans 1–15 (MKLLLLNILLLCCLA). Over 16–1234 (DKLNEFSADI…NNVGAIAAAT (1219 aa)) the chain is Extracellular. Residues Asn-95, Asn-198, Asn-234, Asn-261, Asn-337, Asn-377, Asn-390, Asn-468, Asn-487, Asn-643, Asn-659, Asn-890, Asn-992, Asn-1138, Asn-1204, and Asn-1214 are each glycosylated (N-linked (GlcNAc...) asparagine). A helical transmembrane segment spans residues 1235–1255 (TVAVVVVAVVVALIVVSIGLF). Residues 1256–1293 (KTYQLVSSAMKNAITITNENAEYVGADNEATNAATFNG) lie on the Cytoplasmic side of the membrane.

Heterodimer composed of a 170 kDa heavy subunit (hgl) and a 31/35 kDa light subunit (lgl); disulfide-linked. N-glycosylated.

The protein resides in the cell membrane. Functionally, lectin which binds galactose and N-acetyl-D-galactosamine of host glycoproteins and thus mediates adhesion to host cells. Mediates adherence to host colonic mucins, an essential step for pathogenic tissue invasion. This chain is Galactose/N-acetyl-D-galactosamine lectin heavy subunit 1, found in Entamoeba histolytica (strain ATCC 30459 / HM-1:IMSS / ABRM).